A 635-amino-acid chain; its full sequence is Allantoin permease (635 aa).

Over 1 to 144 the chain is Cytoplasmic; it reads MANDALSAIF…AGTGLQLGLN (144 aa). Residues 145–165 form a helical membrane-spanning segment; the sequence is WWQCWLTVWIGYTFAGIFVVL. Residues 166-174 are Extracellular-facing; that stretch reads NSRFGSAYH. A helical transmembrane segment spans residues 175–195; the sequence is LSFPITVRASFGIFFSMWPII. Topologically, residues 196–198 are cytoplasmic; that stretch reads NRV. A helical transmembrane segment spans residues 199–219; that stretch reads VMAIVWYAVQAWLGATPVALM. Residues 220 to 243 are Extracellular-facing; that stretch reads LKSIFGKNLEDRIPNHFGSPNSTT. A helical membrane pass occupies residues 244 to 264; sequence FEFMCFFIFWVVSIPFVLVAP. Residues 265–269 are Cytoplasmic-facing; that stretch reads HKIRH. The helical transmembrane segment at 270–290 threads the bilayer; it reads LFTVKAALIPFAAFGFLIWAL. At 291–311 the chain is on the extracellular side; that stretch reads KKSHGKIELGTLNDYSPHGSE. A helical membrane pass occupies residues 312–332; it reads FSWIFVRSLMACVANFAALII. The Cytoplasmic portion of the chain corresponds to 333–351; the sequence is NAPDFGRFAKNPQASLWPQ. A helical transmembrane segment spans residues 352 to 372; sequence LVAIPLFFAITCLIGIIVTAA. Residues 373–401 are Extracellular-facing; sequence GYHLYGVNYWSPLDVLGQFLETTYTRGTR. The helical transmembrane segment at 402–422 threads the bilayer; it reads AGVFLISFVFALAQLGTNISA. Residues 423-443 lie on the Cytoplasmic side of the membrane; sequence NSLACGADMTALFPRYINIRR. The chain crosses the membrane as a helical span at residues 444–464; sequence GSLFCVAMALCICPWNLMASS. Residues 465-466 lie on the Extracellular side of the membrane; that stretch reads SK. The helical transmembrane segment at 467–487 threads the bilayer; it reads FTSALGAYAIFLSSIAGVICA. Topologically, residues 488-522 are cytoplasmic; that stretch reads DYFVVRRGYVKLTHLFLAQKGSFYMFGNKFGANWR. A helical transmembrane segment spans residues 523–543; it reads AFVAYICGIAPNLPGFIGDVG. The Extracellular segment spans residues 544–560; sequence APKITVSEGAMRLYYLG. Residues 561–581 form a helical membrane-spanning segment; it reads YPVGFFISAVIYLILCYFFPV. Topologically, residues 582–635 are cytoplasmic; it reads PGTPVTNFLTEKGWFQRWAYVEDFEQDWKNELRRDDLCDDTVSIYDGTEEKIVY.

The protein belongs to the purine-cytosine permease (2.A.39) family.

Its subcellular location is the membrane. Functionally, transport of allantoin. The protein is Allantoin permease (DAL4) of Saccharomyces cerevisiae (strain ATCC 204508 / S288c) (Baker's yeast).